A 468-amino-acid polypeptide reads, in one-letter code: Cysteine--tRNA ligase (468 aa).

C29 serves as a coordination point for Zn(2+). Residues 31-41 (PTVYNYIHIGN) carry the 'HIGH' region motif. Positions 209, 234, and 238 each coordinate Zn(2+). The 'KMSKS' region signature appears at 266–270 (KMSKS). K269 contacts ATP.

The protein belongs to the class-I aminoacyl-tRNA synthetase family. In terms of assembly, monomer. The cofactor is Zn(2+).

The protein resides in the cytoplasm. It carries out the reaction tRNA(Cys) + L-cysteine + ATP = L-cysteinyl-tRNA(Cys) + AMP + diphosphate. This is Cysteine--tRNA ligase from Brevibacillus brevis (strain 47 / JCM 6285 / NBRC 100599).